The primary structure comprises 549 residues: Protein EPD2 (549 aa).

A signal peptide spans 1–20 (MISVIKSLLTLSVLSTLAAA). Asparagine 41 carries N-linked (GlcNAc...) asparagine glycosylation. A disulfide bridge connects residues cysteine 82 and cysteine 111. 2 N-linked (GlcNAc...) asparagine glycosylation sites follow: asparagine 173 and asparagine 261. 5 disulfide bridges follow: cysteine 224–cysteine 358, cysteine 242–cysteine 273, cysteine 381–cysteine 432, cysteine 390–cysteine 456, and cysteine 409–cysteine 414. The N-linked (GlcNAc...) asparagine glycan is linked to asparagine 467. Positions 470 to 518 (ASTSCSAAGGRGLQSGRRSSTTRGGSSSSRSSSSSSSSSTGSGSSNAGI) are disordered. Low complexity predominate over residues 484-514 (SGRRSSTTRGGSSSSRSSSSSSSSSTGSGSS).

The protein belongs to the glycosyl hydrolase 72 family.

The protein localises to the cell membrane. The polypeptide is Protein EPD2 (EPD2) (Candida maltosa (Yeast)).